The following is a 485-amino-acid chain: tRNA sulfurtransferase (485 aa).

Residues 63 to 167 (ERYAERLACI…NEHLYLVEKR (105 aa)) form the THUMP domain. ATP contacts are provided by residues 185–186 (LI), Lys267, Gly289, and Gln298. An intrachain disulfide couples Cys346 to Cys458. The region spanning 406-484 (VSGGEVVVDI…GYHNVKVYRP (79 aa)) is the Rhodanese domain. Cys458 acts as the Cysteine persulfide intermediate in catalysis.

It belongs to the ThiI family.

The protein localises to the cytoplasm. It catalyses the reaction [ThiI sulfur-carrier protein]-S-sulfanyl-L-cysteine + a uridine in tRNA + 2 reduced [2Fe-2S]-[ferredoxin] + ATP + H(+) = [ThiI sulfur-carrier protein]-L-cysteine + a 4-thiouridine in tRNA + 2 oxidized [2Fe-2S]-[ferredoxin] + AMP + diphosphate. The catalysed reaction is [ThiS sulfur-carrier protein]-C-terminal Gly-Gly-AMP + S-sulfanyl-L-cysteinyl-[cysteine desulfurase] + AH2 = [ThiS sulfur-carrier protein]-C-terminal-Gly-aminoethanethioate + L-cysteinyl-[cysteine desulfurase] + A + AMP + 2 H(+). It participates in cofactor biosynthesis; thiamine diphosphate biosynthesis. Functionally, catalyzes the ATP-dependent transfer of a sulfur to tRNA to produce 4-thiouridine in position 8 of tRNAs, which functions as a near-UV photosensor. Also catalyzes the transfer of sulfur to the sulfur carrier protein ThiS, forming ThiS-thiocarboxylate. This is a step in the synthesis of thiazole, in the thiamine biosynthesis pathway. The sulfur is donated as persulfide by IscS. The sequence is that of tRNA sulfurtransferase from Shewanella loihica (strain ATCC BAA-1088 / PV-4).